The following is a 761-amino-acid chain: Zinc finger protein 711 (761 aa).

Residues lysine 224, lysine 235, and lysine 296 each participate in a glycyl lysine isopeptide (Lys-Gly) (interchain with G-Cter in SUMO2) cross-link. 5 consecutive C2H2-type zinc fingers follow at residues 383–408 (YPCH…HPDH), 414–436 (YQCT…LESH), 476–499 (HKCK…LAVH), 505–527 (HVCV…MRTH), and 533–556 (YQCQ…KSKH). Residues 515-761 (RHPSELKKHM…IMRHHKEALM (247 aa)) form a required for transcriptional activation region. The C2H2-type 6; atypical zinc-finger motif lies at 562-584 (YKCEHCPQAFGDERELQRHLDLF). Positions 564, 567, and 580 each coordinate Zn(2+). C2H2-type zinc fingers lie at residues 590-613 (HQCP…ISVH), 619-641 (HKCE…SDIH), 647-670 (HQCR…LSVH), 676-698 (LKCK…MKTH), 704-727 (YQCE…ISIH), and 733-755 (HRCE…IMRH).

It belongs to the krueppel C2H2-type zinc-finger protein family. As to quaternary structure, interacts with PHF8. In terms of tissue distribution, expressed in neural tissues.

It localises to the nucleus. Its function is as follows. Transcription regulator required for brain development. Probably acts as a transcription factor that binds to the promoter of target genes and recruits PHF8 histone demethylase, leading to activated expression of genes involved in neuron development, such as KDM5C. May compete with transcription factor ARX for activation of expression of KDM5C. The sequence is that of Zinc finger protein 711 (ZNF711) from Homo sapiens (Human).